The chain runs to 888 residues: Alanine--tRNA ligase (888 aa).

Zn(2+)-binding residues include histidine 573, histidine 577, cysteine 676, and histidine 680.

Belongs to the class-II aminoacyl-tRNA synthetase family. Zn(2+) is required as a cofactor.

The protein resides in the cytoplasm. It catalyses the reaction tRNA(Ala) + L-alanine + ATP = L-alanyl-tRNA(Ala) + AMP + diphosphate. Functionally, catalyzes the attachment of alanine to tRNA(Ala) in a two-step reaction: alanine is first activated by ATP to form Ala-AMP and then transferred to the acceptor end of tRNA(Ala). Also edits incorrectly charged Ser-tRNA(Ala) and Gly-tRNA(Ala) via its editing domain. This is Alanine--tRNA ligase from Corynebacterium diphtheriae (strain ATCC 700971 / NCTC 13129 / Biotype gravis).